The sequence spans 98 residues: NADH-ubiquinone oxidoreductase chain 4L (98 aa).

3 helical membrane passes run 2 to 22, 29 to 49, and 61 to 81; these read TPIFTNIILAFATAFLGTLIF, SLLCLEGMMLSLFILSTLIIL, and ILLLVFAACEAAIGLALLVMV.

This sequence belongs to the complex I subunit 4L family. Core subunit of respiratory chain NADH dehydrogenase (Complex I) which is composed of 45 different subunits.

Its subcellular location is the mitochondrion inner membrane. It carries out the reaction a ubiquinone + NADH + 5 H(+)(in) = a ubiquinol + NAD(+) + 4 H(+)(out). In terms of biological role, core subunit of the mitochondrial membrane respiratory chain NADH dehydrogenase (Complex I) which catalyzes electron transfer from NADH through the respiratory chain, using ubiquinone as an electron acceptor. Part of the enzyme membrane arm which is embedded in the lipid bilayer and involved in proton translocation. The protein is NADH-ubiquinone oxidoreductase chain 4L (MT-ND4L) of Avahi cleesei (Cleese's woolly lemur).